An 88-amino-acid chain; its full sequence is Small ribosomal subunit protein bS20 (88 aa).

Residues 1-23 (MANSPQAKKRARQNDKARAHNAS) form a disordered region.

This sequence belongs to the bacterial ribosomal protein bS20 family.

Binds directly to 16S ribosomal RNA. This chain is Small ribosomal subunit protein bS20, found in Saccharophagus degradans (strain 2-40 / ATCC 43961 / DSM 17024).